Reading from the N-terminus, the 29-residue chain is Chassatide C10 (29 aa).

Residues 1-29 (GEYCGESCYLIPCFTPGCYCVSRQCVNKN) constitute a cross-link (cyclopeptide (Gly-Asn)). 3 disulfides stabilise this stretch: Cys4–Cys18, Cys8–Cys20, and Cys13–Cys25.

This is a cyclic peptide.

Functionally, probably participates in a plant defense mechanism. Has no activity against bacteria up to a concentration of 80 uM. Has cytotoxic but no hemolytic activity. In Chassalia chartacea (Chassalia curviflora), this protein is Chassatide C10.